The following is a 1182-amino-acid chain: Intraflagellar transport protein 122 homolog (1182 aa).

WD repeat units lie at residues 10–50, 51–91, 93–129, 131–169, 174–217, 219–258, 260–300, and 453–492; these read KAEQ…QPLK, GHKD…LKYT, NDSI…VSKH, SSSK…KVKI, GSLS…IGKD, PLNF…LGTV, EQNS…HGLY, and KQAT…LLFQ.

As to quaternary structure, component of the IFT complex A (IFT-A) complex. IFT-A complex is divided into a core subcomplex composed of IFT122:IFT140:WDR19 which is associated with TULP3 and a peripheral subcomplex composed of IFT43:WDR35:TTC21B. Interacts with IFT43:WDR35; the interaction connects the 2 IFT-A subcomplexes. Interacts with IFTAP; the interaction associates IFTAP with IFT-A complex.

Its subcellular location is the cell projection. It is found in the cilium. The protein localises to the cytoplasm. It localises to the cytoskeleton. The protein resides in the cilium basal body. In terms of biological role, as a component of the IFT complex A (IFT-A), a complex required for retrograde ciliary transport and entry into cilia of G protein-coupled receptors (GPCRs), it is required in ciliogenesis and ciliary protein trafficking. Involved in cilia formation during neuronal patterning. Acts as a negative regulator of Shh signaling. Required to recruit TULP3 to primary cilia. In Mus musculus (Mouse), this protein is Intraflagellar transport protein 122 homolog.